The primary structure comprises 258 residues: Methanol--corrinoid protein (258 aa).

The region spanning 30-124 (AEELYPKDEL…NSGATPKTKG (95 aa)) is the B12-binding N-terminal domain. The B12-binding domain maps to 123-248 (KGTVVCHVAE…DAIIAGTTDV (126 aa)). Residue histidine 136 coordinates methylcob(III)alamin.

It belongs to the methylamine corrinoid protein family. In terms of assembly, heterotetramer, composed of 2 MtaB and 2 MtaC subunits.

Its function is as follows. Harbors a corrinoid prosthetic group and acts as a methyl group carrier in methanogenesis in the methanol pathway. The methyl group of methanol is first transferred to the corrinoid prosthetic group of MtaC in the cob(I)amide oxidation state. This reaction is mediated by MtaB. The methyl group from MtaC is then transferred to coenzyme M by MtaA. This chain is Methanol--corrinoid protein (mtaC), found in Methanosarcina barkeri (strain Fusaro / DSM 804).